Reading from the N-terminus, the 269-residue chain is Formamidopyrimidine-DNA glycosylase (269 aa).

Pro-2 serves as the catalytic Schiff-base intermediate with DNA. The active-site Proton donor is Glu-3. Catalysis depends on Lys-57, which acts as the Proton donor; for beta-elimination activity. Residues His-90, Arg-109, and Lys-150 each coordinate DNA. The FPG-type zinc-finger motif lies at 235–269; it reads QVYGRKGEPCRVCGTPIVATKHAQRATFYCRQCQK. The active-site Proton donor; for delta-elimination activity is the Arg-259.

The protein belongs to the FPG family. In terms of assembly, monomer. Zn(2+) is required as a cofactor.

It carries out the reaction Hydrolysis of DNA containing ring-opened 7-methylguanine residues, releasing 2,6-diamino-4-hydroxy-5-(N-methyl)formamidopyrimidine.. The enzyme catalyses 2'-deoxyribonucleotide-(2'-deoxyribose 5'-phosphate)-2'-deoxyribonucleotide-DNA = a 3'-end 2'-deoxyribonucleotide-(2,3-dehydro-2,3-deoxyribose 5'-phosphate)-DNA + a 5'-end 5'-phospho-2'-deoxyribonucleoside-DNA + H(+). Its function is as follows. Involved in base excision repair of DNA damaged by oxidation or by mutagenic agents. Acts as a DNA glycosylase that recognizes and removes damaged bases. Has a preference for oxidized purines, such as 7,8-dihydro-8-oxoguanine (8-oxoG). Has AP (apurinic/apyrimidinic) lyase activity and introduces nicks in the DNA strand. Cleaves the DNA backbone by beta-delta elimination to generate a single-strand break at the site of the removed base with both 3'- and 5'-phosphates. The protein is Formamidopyrimidine-DNA glycosylase of Shigella dysenteriae serotype 1 (strain Sd197).